Reading from the N-terminus, the 502-residue chain is Cyclin-dependent kinase 19 (502 aa).

Residue methionine 1 is modified to N-acetylmethionine. The 315-residue stretch at 21–335 (EYEGCKVGRG…SEQALQDPYF (315 aa)) folds into the Protein kinase domain. ATP-binding positions include 27–35 (VGRGTYGHV) and lysine 52. Residue aspartate 151 is the Proton acceptor of the active site. A disordered region spans residues 359 to 502 (LNEDDPEEKG…YHPSHQAHRY (144 aa)). A compositionally biased stretch (low complexity) spans 371–392 (NQQQQQNQHQQPTAPPQQAAAP). The segment covering 408 to 421 (TAGGAGAGVGGTGA) has biased composition (gly residues). Residues 424–435 (QHSQDSSLNQVP) show a composition bias toward polar residues. The residue at position 449 (serine 449) is a Phosphoserine. Residues 458–467 (YQHSSSRLNY) are compositionally biased toward polar residues. Residues 468–496 (QSSVQGSSQSQSTLGYSSSSQQSSQYHPS) are compositionally biased toward low complexity.

It belongs to the protein kinase superfamily. CMGC Ser/Thr protein kinase family. CDC2/CDKX subfamily.

It is found in the cytoplasm. It localises to the perinuclear region. Its subcellular location is the nucleus. It carries out the reaction L-seryl-[protein] + ATP = O-phospho-L-seryl-[protein] + ADP + H(+). It catalyses the reaction L-threonyl-[protein] + ATP = O-phospho-L-threonyl-[protein] + ADP + H(+). The protein is Cyclin-dependent kinase 19 (CDK19) of Homo sapiens (Human).